The following is a 562-amino-acid chain: Serine palmitoyltransferase 2 (562 aa).

The chain crosses the membrane as a helical span at residues 61 to 81 (LITYLNYLILIILGHIHDFLG). The residue at position 365 (Lys365) is an N6-(pyridoxal phosphate)lysine.

This sequence belongs to the class-II pyridoxal-phosphate-dependent aminotransferase family. It depends on pyridoxal 5'-phosphate as a cofactor.

It is found in the membrane. It catalyses the reaction L-serine + hexadecanoyl-CoA + H(+) = 3-oxosphinganine + CO2 + CoA. Its pathway is lipid metabolism; sphingolipid metabolism. This Kluyveromyces lactis (strain ATCC 8585 / CBS 2359 / DSM 70799 / NBRC 1267 / NRRL Y-1140 / WM37) (Yeast) protein is Serine palmitoyltransferase 2 (LCB2).